The primary structure comprises 316 residues: Holliday junction branch migration complex subunit RuvB (316 aa).

Positions 1 to 165 are large ATPase domain (RuvB-L); it reads MQITRPHNFE…FGYIARFVSY (165 aa). ATP is bound by residues R5, G46, K49, T50, S51, 112–114, R155, Y165, and R202; that span reads EDF. A Mg(2+)-binding site is contributed by T50. Positions 166-236 are small ATPAse domain (RuvB-S); that stretch reads NAEDMKQIIR…IIKKTFKSLD (71 aa). The segment at 239–316 is head domain (RuvB-H); it reads EYGLTKDHVE…TYLLKEKLIW (78 aa). 2 residues coordinate DNA: K294 and R299.

It belongs to the RuvB family. Homohexamer. Forms an RuvA(8)-RuvB(12)-Holliday junction (HJ) complex. HJ DNA is sandwiched between 2 RuvA tetramers; dsDNA enters through RuvA and exits via RuvB. An RuvB hexamer assembles on each DNA strand where it exits the tetramer. Each RuvB hexamer is contacted by two RuvA subunits (via domain III) on 2 adjacent RuvB subunits; this complex drives branch migration. In the full resolvosome a probable DNA-RuvA(4)-RuvB(12)-RuvC(2) complex forms which resolves the HJ.

The protein localises to the cytoplasm. The enzyme catalyses ATP + H2O = ADP + phosphate + H(+). Functionally, the RuvA-RuvB-RuvC complex processes Holliday junction (HJ) DNA during genetic recombination and DNA repair, while the RuvA-RuvB complex plays an important role in the rescue of blocked DNA replication forks via replication fork reversal (RFR). RuvA specifically binds to HJ cruciform DNA, conferring on it an open structure. The RuvB hexamer acts as an ATP-dependent pump, pulling dsDNA into and through the RuvAB complex. RuvB forms 2 homohexamers on either side of HJ DNA bound by 1 or 2 RuvA tetramers; 4 subunits per hexamer contact DNA at a time. Coordinated motions by a converter formed by DNA-disengaged RuvB subunits stimulates ATP hydrolysis and nucleotide exchange. Immobilization of the converter enables RuvB to convert the ATP-contained energy into a lever motion, pulling 2 nucleotides of DNA out of the RuvA tetramer per ATP hydrolyzed, thus driving DNA branch migration. The RuvB motors rotate together with the DNA substrate, which together with the progressing nucleotide cycle form the mechanistic basis for DNA recombination by continuous HJ branch migration. Branch migration allows RuvC to scan DNA until it finds its consensus sequence, where it cleaves and resolves cruciform DNA. The polypeptide is Holliday junction branch migration complex subunit RuvB (Mycoplasmopsis synoviae (strain 53) (Mycoplasma synoviae)).